The chain runs to 448 residues: Probable glycine dehydrogenase (decarboxylating) subunit 1 (448 aa).

The protein belongs to the GcvP family. N-terminal subunit subfamily. The glycine cleavage system is composed of four proteins: P, T, L and H. In this organism, the P 'protein' is a heterodimer of two subunits.

It catalyses the reaction N(6)-[(R)-lipoyl]-L-lysyl-[glycine-cleavage complex H protein] + glycine + H(+) = N(6)-[(R)-S(8)-aminomethyldihydrolipoyl]-L-lysyl-[glycine-cleavage complex H protein] + CO2. The glycine cleavage system catalyzes the degradation of glycine. The P protein binds the alpha-amino group of glycine through its pyridoxal phosphate cofactor; CO(2) is released and the remaining methylamine moiety is then transferred to the lipoamide cofactor of the H protein. The sequence is that of Probable glycine dehydrogenase (decarboxylating) subunit 1 from Listeria monocytogenes serotype 4a (strain HCC23).